The following is an 861-amino-acid chain: Leucine--tRNA ligase (861 aa).

Positions 42 to 52 (PYPSGRIHMGH) match the 'HIGH' region motif. The 'KMSKS' region motif lies at 623–627 (KMSKS). Lys626 provides a ligand contact to ATP.

It belongs to the class-I aminoacyl-tRNA synthetase family.

The protein resides in the cytoplasm. It catalyses the reaction tRNA(Leu) + L-leucine + ATP = L-leucyl-tRNA(Leu) + AMP + diphosphate. This is Leucine--tRNA ligase from Caulobacter vibrioides (strain ATCC 19089 / CIP 103742 / CB 15) (Caulobacter crescentus).